The sequence spans 188 residues: Chitin synthase 1 (188 aa).

It belongs to the chitin synthase family. Class I subfamily.

It is found in the cell membrane. It carries out the reaction [(1-&gt;4)-N-acetyl-beta-D-glucosaminyl](n) + UDP-N-acetyl-alpha-D-glucosamine = [(1-&gt;4)-N-acetyl-beta-D-glucosaminyl](n+1) + UDP + H(+). Its function is as follows. Polymerizes chitin, a structural polymer of the cell wall and septum, by transferring the sugar moiety of UDP-GlcNAc to the non-reducing end of the growing chitin polymer. This chain is Chitin synthase 1 (CHS1), found in Ajellomyces dermatitidis (Blastomyces dermatitidis).